A 647-amino-acid polypeptide reads, in one-letter code: Carotenoid phi-ring synthase (647 aa).

FAD contacts are provided by residues Ala67, 86 to 87, Lys94, and Tyr120; that span reads EA. The region spanning 322–416 is the Rieske domain; sequence VASIPKREVP…VREAGEMLVI (95 aa). [2Fe-2S] cluster contacts are provided by Cys362, His364, Cys380, and His383. Asp601 and Met612 together coordinate FAD.

This sequence belongs to the carotenoid/retinoid oxidoreductase family. The cofactor is FAD. Requires [2Fe-2S] cluster as cofactor.

The catalysed reaction is a carotenoid beta-end derivative + 2 A = a carotenoid phi-end derivative + 2 AH2. It functions in the pathway carotenoid biosynthesis. Functionally, involved in the biosynthesis of chlorobactene, a carotenoid with aromatic end group. Catalyzes the introduction of two additional double bonds into the ionone ring of gamma-carotene to produce chlorobactene. The reaction includes an intramolecular methyl transfer from position C1 to position C2 of the ring. This is Carotenoid phi-ring synthase from Chlorobaculum tepidum (strain ATCC 49652 / DSM 12025 / NBRC 103806 / TLS) (Chlorobium tepidum).